The primary structure comprises 386 residues: Epoxyqueuosine reductase (386 aa).

Residues R57, C97, D134, 139–141, S152, N155, I158, and L169 each bind cob(II)alamin; that span reads SDR. Residue D134 is the Proton donor of the active site. The 4Fe-4S ferredoxin-type domain occupies 178–208; sequence FEPDVPIEDMCGSCTKCLDACPTGALVNPGQ. C188, C191, C194, C198, and C214 together coordinate [4Fe-4S] cluster. Residue S216 coordinates cob(II)alamin. TRNA is bound by residues Q220 and K222. 3 residues coordinate [4Fe-4S] cluster: C240, C243, and C247. 240-241 is a cob(II)alamin binding site; it reads CD. TRNA is bound by residues N280, R281, R295, K297, and K298. The stretch at 333–357 is one HEAT-like PBS-type repeat; the sequence is RGTAAWAIGKIGDPAYAEELEKALE.

It belongs to the QueG family. In terms of assembly, monomer. The cofactor is cob(II)alamin. [4Fe-4S] cluster serves as cofactor.

Its subcellular location is the cytoplasm. It carries out the reaction epoxyqueuosine(34) in tRNA + AH2 = queuosine(34) in tRNA + A + H2O. It participates in tRNA modification; tRNA-queuosine biosynthesis. Functionally, catalyzes the conversion of epoxyqueuosine (oQ) to queuosine (Q), which is a hypermodified base found in the wobble positions of tRNA(Asp), tRNA(Asn), tRNA(His) and tRNA(Tyr). In Bacillus subtilis (strain 168), this protein is Epoxyqueuosine reductase.